A 437-amino-acid polypeptide reads, in one-letter code: O-acetyl-L-homoserine sulfhydrylase (437 aa).

At Lys-216 the chain carries N6-(pyridoxal phosphate)lysine.

The protein belongs to the trans-sulfuration enzymes family. Homohexamer. The cofactor is pyridoxal 5'-phosphate.

It carries out the reaction O-acetyl-L-homoserine + hydrogen sulfide = L-homocysteine + acetate. The catalysed reaction is O-acetyl-L-homoserine + methanethiol = L-methionine + acetate + H(+). It functions in the pathway amino-acid biosynthesis; L-methionine biosynthesis via de novo pathway; L-homocysteine from O-acetyl-L-homoserine: step 1/1. Inhibited by methionine and cystathionine. In terms of biological role, catalyzes the conversion of O-acetyl-L-homoserine (OAH) into homocysteine in the methionine biosynthesis pathway. Can also use dimethyldisulfide and methanethiol as reduced sulfur sources, leading to the direct formation of methionine. Has weak cystathionine gamma-synthase activity. The sequence is that of O-acetyl-L-homoserine sulfhydrylase from Corynebacterium glutamicum (strain ATCC 13032 / DSM 20300 / JCM 1318 / BCRC 11384 / CCUG 27702 / LMG 3730 / NBRC 12168 / NCIMB 10025 / NRRL B-2784 / 534).